Consider the following 439-residue polypeptide: Magnesium-dependent glutamate N-prenyltransferase (439 aa).

The Mg(2+) site is built by N322, T326, E330, and F337.

The protein belongs to the terpene synthase family. The cofactor is Mg(2+).

The enzyme catalyses dimethylallyl diphosphate + L-glutamate = prekainate + diphosphate. It participates in secondary metabolite biosynthesis. In terms of biological role, magnesium-dependent glutamate N-prenyltransferase: part of the gene cluster that mediates the biosynthesis of kainic acid (KA) and derivatives, natural products with neurochemical activity acting as ionotropic glutamate receptor (iGluR) agonists, thus being neurotoxins. Catalyzes the conversion of L-glutamic acid (L-Glu) to prekainic acid in the presence of dimethylallyl diphosphate (DMAPP). Can also use geranyl diphosphate (GPP) as substrate, thus leading to the formation of N-geranyl-L-glutamic acid (L-NGG). The protein is Magnesium-dependent glutamate N-prenyltransferase of Digenea simplex (Marine red alga).